The following is a 124-amino-acid chain: NADPH-dependent 7-cyano-7-deazaguanine reductase (124 aa).

Cysteine 40 (thioimide intermediate) is an active-site residue. Aspartate 47 (proton donor) is an active-site residue. Residues 62 to 64 and 81 to 82 contribute to the substrate site; these read VEL and HE.

The protein belongs to the GTP cyclohydrolase I family. QueF type 1 subfamily.

The protein localises to the cytoplasm. It catalyses the reaction 7-aminomethyl-7-carbaguanine + 2 NADP(+) = 7-cyano-7-deazaguanine + 2 NADPH + 3 H(+). It participates in tRNA modification; tRNA-queuosine biosynthesis. Catalyzes the NADPH-dependent reduction of 7-cyano-7-deazaguanine (preQ0) to 7-aminomethyl-7-deazaguanine (preQ1). The polypeptide is NADPH-dependent 7-cyano-7-deazaguanine reductase (Wolinella succinogenes (strain ATCC 29543 / DSM 1740 / CCUG 13145 / JCM 31913 / LMG 7466 / NCTC 11488 / FDC 602W) (Vibrio succinogenes)).